The primary structure comprises 339 residues: Phosphatidylglycerol--prolipoprotein diacylglyceryl transferase (339 aa).

A run of 3 helical transmembrane segments spans residues 43–63 (FTIAWYGVLMMLGIAAGYWLG), 81–101 (ILWMLFWGFVGARLVFVLTSW), and 121–141 (NGGISIHGGLIGGVLTLIYFA). Arg-167 provides a ligand contact to a 1,2-diacyl-sn-glycero-3-phospho-(1'-sn-glycerol). Transmembrane regions (helical) follow at residues 231-251 (FTQLYGVIIGIILAVASYFWL) and 300-320 (LWTDTQIFSVPLILVSLWMLW).

It belongs to the Lgt family.

It localises to the cell membrane. The enzyme catalyses L-cysteinyl-[prolipoprotein] + a 1,2-diacyl-sn-glycero-3-phospho-(1'-sn-glycerol) = an S-1,2-diacyl-sn-glyceryl-L-cysteinyl-[prolipoprotein] + sn-glycerol 1-phosphate + H(+). The protein operates within protein modification; lipoprotein biosynthesis (diacylglyceryl transfer). Its function is as follows. Catalyzes the transfer of the diacylglyceryl group from phosphatidylglycerol to the sulfhydryl group of the N-terminal cysteine of a prolipoprotein, the first step in the formation of mature lipoproteins. The polypeptide is Phosphatidylglycerol--prolipoprotein diacylglyceryl transferase (Deinococcus radiodurans (strain ATCC 13939 / DSM 20539 / JCM 16871 / CCUG 27074 / LMG 4051 / NBRC 15346 / NCIMB 9279 / VKM B-1422 / R1)).